Consider the following 289-residue polypeptide: MAAETASGYIQHHLQNLTYGQLPDGSWGFAHSAAEAKAMGFWAFHLDTLGWSVALGLIFLLIFRMAAKKATSGQPGGLQNFVEVMVDFVNGSVKDSFHGRSPVIAPLALTIFVWVFLMNAVDLVPVDWIPQLAILISGDPHIPFRAVSTTDPNATLAMAFCVFALIIFYSIKVKGLGGFIGELTLHPFGSKNIFVQILLIPVNFLLEFVTLIAKPISLALRLFGNMYAGELVFILIAVMFGSGLLWLSGLGVVLQWAWAVFHILIITLQAFIFMMLTIVYLSMAHEDNH.

6 helical membrane passes run 43–63 (AFHL…LLIF), 103–123 (VIAP…AVDL), 160–180 (FCVF…GGFI), 193–213 (IFVQ…TLIA), 232–252 (VFIL…GLGV), and 259–279 (AVFH…LTIV).

This sequence belongs to the ATPase A chain family. As to quaternary structure, F-type ATPases have 2 components, CF(1) - the catalytic core - and CF(0) - the membrane proton channel. CF(1) has five subunits: alpha(3), beta(3), gamma(1), delta(1), epsilon(1). CF(0) has three main subunits: a(1), b(2) and c(9-12). The alpha and beta chains form an alternating ring which encloses part of the gamma chain. CF(1) is attached to CF(0) by a central stalk formed by the gamma and epsilon chains, while a peripheral stalk is formed by the delta and b chains.

Its subcellular location is the cell inner membrane. Functionally, key component of the proton channel; it plays a direct role in the translocation of protons across the membrane. In Pseudomonas putida (strain ATCC 700007 / DSM 6899 / JCM 31910 / BCRC 17059 / LMG 24140 / F1), this protein is ATP synthase subunit a.